The primary structure comprises 448 residues: Histidinol dehydrogenase (448 aa).

NAD(+) is bound by residues tyrosine 136, glutamine 197, and asparagine 220. Residues serine 243, glutamine 265, and histidine 268 each contribute to the substrate site. Zn(2+) is bound by residues glutamine 265 and histidine 268. Catalysis depends on proton acceptor residues glutamate 333 and histidine 334. Histidine 334, aspartate 367, glutamate 421, and histidine 426 together coordinate substrate. Aspartate 367 is a Zn(2+) binding site. Histidine 426 contributes to the Zn(2+) binding site.

The protein belongs to the histidinol dehydrogenase family. The cofactor is Zn(2+).

The catalysed reaction is L-histidinol + 2 NAD(+) + H2O = L-histidine + 2 NADH + 3 H(+). Its pathway is amino-acid biosynthesis; L-histidine biosynthesis; L-histidine from 5-phospho-alpha-D-ribose 1-diphosphate: step 9/9. Functionally, catalyzes the sequential NAD-dependent oxidations of L-histidinol to L-histidinaldehyde and then to L-histidine. This chain is Histidinol dehydrogenase, found in Pseudomonas syringae pv. tomato (strain ATCC BAA-871 / DC3000).